Consider the following 274-residue polypeptide: Formamidopyrimidine-DNA glycosylase (274 aa).

Proline 2 acts as the Schiff-base intermediate with DNA in catalysis. The active-site Proton donor is the glutamate 3. Lysine 57 serves as the catalytic Proton donor; for beta-elimination activity. Positions 92, 111, and 152 each coordinate DNA. Residues 237 to 271 (QVYGRKGEECRECGTLIQAKVIGQRNSYFCPDCQP) form an FPG-type zinc finger. Arginine 261 functions as the Proton donor; for delta-elimination activity in the catalytic mechanism.

The protein belongs to the FPG family. As to quaternary structure, monomer. Zn(2+) is required as a cofactor.

It carries out the reaction Hydrolysis of DNA containing ring-opened 7-methylguanine residues, releasing 2,6-diamino-4-hydroxy-5-(N-methyl)formamidopyrimidine.. The enzyme catalyses 2'-deoxyribonucleotide-(2'-deoxyribose 5'-phosphate)-2'-deoxyribonucleotide-DNA = a 3'-end 2'-deoxyribonucleotide-(2,3-dehydro-2,3-deoxyribose 5'-phosphate)-DNA + a 5'-end 5'-phospho-2'-deoxyribonucleoside-DNA + H(+). Involved in base excision repair of DNA damaged by oxidation or by mutagenic agents. Acts as a DNA glycosylase that recognizes and removes damaged bases. Has a preference for oxidized purines, such as 7,8-dihydro-8-oxoguanine (8-oxoG). Has AP (apurinic/apyrimidinic) lyase activity and introduces nicks in the DNA strand. Cleaves the DNA backbone by beta-delta elimination to generate a single-strand break at the site of the removed base with both 3'- and 5'-phosphates. This is Formamidopyrimidine-DNA glycosylase from Haemophilus ducreyi (strain 35000HP / ATCC 700724).